A 141-amino-acid chain; its full sequence is Hemoglobin subunit alpha-A (141 aa).

A Globin domain is found at Val1–Arg141. His58 contacts O2. Position 87 (His87) interacts with heme b.

Belongs to the globin family. As to quaternary structure, heterotetramer of two alpha chains and two beta chains. Red blood cells.

Functionally, involved in oxygen transport from the lung to the various peripheral tissues. In Branta canadensis (Canada goose), this protein is Hemoglobin subunit alpha-A (HBAA).